A 214-amino-acid chain; its full sequence is Redox-sensing transcriptional repressor Rex (214 aa).

Residues 17-56 constitute a DNA-binding region (H-T-H motif); the sequence is KYHRYLEELLKSDVDRISSKELSEKIGFTASQIRQDLNCF. 91 to 96 contributes to the NAD(+) binding site; sequence GAGNIG.

The protein belongs to the transcriptional regulatory Rex family. In terms of assembly, homodimer.

The protein localises to the cytoplasm. Functionally, modulates transcription in response to changes in cellular NADH/NAD(+) redox state. This Clostridium acetobutylicum (strain ATCC 824 / DSM 792 / JCM 1419 / IAM 19013 / LMG 5710 / NBRC 13948 / NRRL B-527 / VKM B-1787 / 2291 / W) protein is Redox-sensing transcriptional repressor Rex.